The primary structure comprises 29 residues: Dermaseptin-1 (29 aa).

Val29 carries the valine amide modification.

In terms of tissue distribution, expressed by the skin glands.

The protein localises to the secreted. In terms of biological role, antimicrobial peptide, active against the Gram-positive bacterium S.aureus, the Gram-negative bacteria E.coli and P.aeruginosa, and the yeasts C.albicans and P.brasiliensis. Has hemolytic activity (40% hemolysis at 128 ug/ml). This is Dermaseptin-1 from Phyllomedusa tarsius (Brownbelly leaf frog).